We begin with the raw amino-acid sequence, 349 residues long: Probable G-protein coupled receptor 21 (349 aa).

Over 1 to 32 (MNSTLDGNQSSHPFCLLAFGYLETVNFCLLEV) the chain is Extracellular. N-linked (GlcNAc...) asparagine glycosylation is found at asparagine 2 and asparagine 8. A helical membrane pass occupies residues 33-53 (LIIVFLTVLIISGNIIVIFVF). The Cytoplasmic portion of the chain corresponds to 54 to 75 (HCAPLLNHHTTSYFIQTMAYAD). The helical transmembrane segment at 76–96 (LFVGVSCVVPSLSLLHHPLPV) threads the bilayer. The Extracellular segment spans residues 97–104 (EESLTCQI). A helical membrane pass occupies residues 105-125 (FGFVVSVLKSVSMASLACISI). The Cytoplasmic segment spans residues 126–147 (DRYIAITKPLTYNTLVTPWRLR). The chain crosses the membrane as a helical span at residues 148 to 168 (LCIFLIWLYSTLVFLPSFFHW). Residues 169-191 (GKPGYHGDVFQWCAESWHTDSYF) lie on the Extracellular side of the membrane. Residues 192–212 (TLFIVMMLYAPAALIVCFTYF) traverse the membrane as a helical segment. The Cytoplasmic portion of the chain corresponds to 213–252 (NIFRICQQHTKDISERQARFSSQSGETGEVQACPDKRYAM). A helical membrane pass occupies residues 253–273 (VLFRITSVFYILWLPYIIYFL). The Extracellular segment spans residues 274 to 283 (LESSTGHSNR). Residues 284–304 (FASFLTTWLAISNSFCNCVIY) form a helical membrane-spanning segment. Topologically, residues 305–349 (SLSNSVFQRGLKRLSGAMCTSCASQTTANDPYTVRSKGPLNGCHI) are cytoplasmic.

The protein belongs to the G-protein coupled receptor 1 family. As to expression, not detected in the brain regions thalamus, putamen, caudate, frontal cortex, pons, hypothalamus, hippocampus.

Its subcellular location is the cell membrane. Orphan receptor. The polypeptide is Probable G-protein coupled receptor 21 (GPR21) (Homo sapiens (Human)).